We begin with the raw amino-acid sequence, 717 residues long: Polyribonucleotide nucleotidyltransferase (717 aa).

Mg(2+) contacts are provided by D496 and D502. Residues 563 to 622 (PRLLTIKIDPDLIGLVIGPGGKTVKGITEQTGTKIDIDDDGTVTISSTDGEQAEKAKRLI) enclose the KH domain. The S1 motif domain occupies 632 to 700 (GEVYLGRVTR…SKGRLNLTRL (69 aa)).

It belongs to the polyribonucleotide nucleotidyltransferase family. The cofactor is Mg(2+).

The protein localises to the cytoplasm. The enzyme catalyses RNA(n+1) + phosphate = RNA(n) + a ribonucleoside 5'-diphosphate. In terms of biological role, involved in mRNA degradation. Catalyzes the phosphorolysis of single-stranded polyribonucleotides processively in the 3'- to 5'-direction. This chain is Polyribonucleotide nucleotidyltransferase, found in Microcystis aeruginosa (strain NIES-843 / IAM M-2473).